The following is a 2879-amino-acid chain: Peramine synthetase ppzA (2879 aa).

Residues 1-12 (MTYDEGGHRNNE) are compositionally biased toward basic and acidic residues. Positions 1–52 (MTYDEGGHRNNEETPQDVNMSSNNEGMSTSSPTGSYGEIIGQATVSVPQEDQ) are disordered. Residues 16-34 (QDVNMSSNNEGMSTSSPTG) are compositionally biased toward polar residues. Positions 351-747 (QEQCRLQPNT…VGRKDTQVKI (397 aa)) are adenylation 1. The Carrier 1 domain maps to 882-958 (QPLSDMERLL…DLSRQSKYIE (77 aa)). An O-(pantetheine 4'-phosphoryl)serine modification is found at serine 919. The condensation stretch occupies residues 997 to 1410 (DAYPCTPLQE…ITILTTEDLE (414 aa)). An adenylation 2 region spans residues 1433–1827 (DKVQHRPNAP…LSFVRRKDTT (395 aa)). The tract at residues 1958 to 2050 (LEIGCGSGMM…KYLVKLIQDI (93 aa)) is methylation (Met) domain. Positions 2370–2448 (WPTTDTGKEL…RLLLDCCCDD (79 aa)) constitute a Carrier 2 domain. Residue serine 2407 is modified to O-(pantetheine 4'-phosphoryl)serine. Residues 2500–2817 (TVLLTGANGF…LEDMLQDLDD (318 aa)) form a thiesterase (TE) domain region.

The protein belongs to the NRP synthetase family. Pantetheine 4'-phosphate serves as cofactor.

It carries out the reaction (S)-1-pyrroline-5-carboxylate + L-arginine + S-adenosyl-L-methionine + 2 ATP = peramine + 2 AMP + S-adenosyl-L-homocysteine + 2 diphosphate + H2O + 2 H(+). Its pathway is secondary metabolite biosynthesis. Its function is as follows. Nonribosomal peptide synthetase; part of the gene cluster that mediates the biosynthesis of pyrrolopyrazines, secondary metabolites showing insecticidal activity. The single multifunctional NRPS ppzA is responsible for the biosynthesis of peramine. The condensation domain of ppzA is proposed to catalyze formation of a peptide bond between 1-pyrroline-5-carboxylate and arginine. The methylation domain of ppzA would catalyze the N-methylation of the alpha-amino group of arginine. The reductase domain is proposed to be responsible for reduction of the thioester and the cyclization to form an iminium ion resulting in release from the peptide synthetase. Deprotonation of this intermediate and oxidation of the pyrroline ring would give rise to peramine. This final oxidation to give the pyrrole functionality may be spontaneous. In Epichloe species that produce only peramine, the peramine synthetase gene is not localized in a gene cluster, in contrast to Metarhizium species that contain additional pyrrolopyrazine biosynthesis genes. The 2-oxoglutarate-Fe(II) type oxidoreductase ppzC hydroxylates peramine to yield the newly identified compound 8-hydroxyperamine whereas ppzD converts L-proline into trans-4-hydroxy-L-proline, a precursor of peramine biosynthesis. The protein is Peramine synthetase ppzA of Metarhizium rileyi (strain RCEF 4871) (Nomuraea rileyi).